We begin with the raw amino-acid sequence, 486 residues long: MFDNEEGQGPKSTFTTYMAEGDQLFQRGEYVKAVESFTTALTLQPDDKNCLVSRSRCYVKLGDAENALKDAESSLKDNKNYFKGLYQKAEALYTMGDFEFALVYYHRGHKLRPELQEFRLGIQKAQEAIDNSVGSPSSVKLVNKGDLSFFHNGVHPQNLNPSNKKESKKHSKKTDKGEKTAKQLLGELYSDREYLKKLLQDEDLVKCKIRSGERVQDLIVGSISYLDTRMAFWQQQKPIYARQRDRKLMQQQWSKVLHKPPSDPTRYVLSSLEEIDTALSAGYTESGLNKARELMKVVKDWSEDALPNKNEVLGNLHSYIGNALMDLGNMDRALHHHEKDLELAKKCDLTDSKSRALDNIGRVYARIGKFQQAIEVWEKKLPLACGGLEKAWLFHEIGRCYLELKRYMEARDYGSRSLMAADDISDEKWQLNASVLMAQAELKLSNYKASVLHFERALERAKLLQDDSASEAIQKALCEARLRVTQ.

3 TPR repeats span residues 14-47 (FTTY…QPDD), 49-81 (NCLV…NKNY), and 82-115 (FKGL…RPEL). Residues 153–180 (GVHPQNLNPSNKKESKKHSKKTDKGEKT) form a disordered region. TPR repeat units follow at residues 314–347 (GNLH…AKKC), 354–387 (SRAL…ACGG), 391–424 (AWLF…ADDI), and 431–464 (LNAS…AKLL).

Component of the outer dynein arm-docking complex along with ODAD1, ODAD2 and ODAD3.

It is found in the cytoplasm. The protein resides in the cytoskeleton. It localises to the cilium axoneme. In terms of biological role, component of the outer dynein arm-docking complex (ODA-DC) that mediates outer dynein arms (ODA) binding onto the doublet microtubule. Plays an essential role for the assembly of ODA-DC and in the docking of ODA in ciliary axoneme. In Danio rerio (Zebrafish), this protein is Outer dynein arm-docking complex subunit 4 (odad4).